Here is a 119-residue protein sequence, read N- to C-terminus: Large ribosomal subunit protein uL24 (119 aa).

Belongs to the universal ribosomal protein uL24 family. As to quaternary structure, part of the 50S ribosomal subunit.

One of two assembly initiator proteins, it binds directly to the 5'-end of the 23S rRNA, where it nucleates assembly of the 50S subunit. Functionally, one of the proteins that surrounds the polypeptide exit tunnel on the outside of the subunit. The chain is Large ribosomal subunit protein uL24 from Sulfurihydrogenibium sp. (strain YO3AOP1).